A 176-amino-acid chain; its full sequence is Cystatin-related protein 2 (176 aa).

The N-terminal stretch at 1–26 (MYKTLCGTQLLLAIFVLFLNFSHATA) is a signal peptide. Residues 27–30 (KGTR) constitute a propeptide that is removed on maturation. N-linked (GlcNAc...) asparagine glycosylation occurs at Asn-71. 2 cysteine pairs are disulfide-bonded: Cys-129/Cys-139 and Cys-153/Cys-173.

Belongs to the cystatin family. Prostate.

This Rattus norvegicus (Rat) protein is Cystatin-related protein 2 (Crp2).